The chain runs to 132 residues: Ribonuclease P protein component 4 (132 aa).

Residues cysteine 67, cysteine 70, cysteine 96, and cysteine 99 each coordinate Zn(2+).

It belongs to the eukaryotic/archaeal RNase P protein component 4 family. In terms of assembly, consists of a catalytic RNA component and at least 4-5 protein subunits. Zn(2+) serves as cofactor.

It is found in the cytoplasm. It catalyses the reaction Endonucleolytic cleavage of RNA, removing 5'-extranucleotides from tRNA precursor.. Functionally, part of ribonuclease P, a protein complex that generates mature tRNA molecules by cleaving their 5'-ends. In Thermococcus kodakarensis (strain ATCC BAA-918 / JCM 12380 / KOD1) (Pyrococcus kodakaraensis (strain KOD1)), this protein is Ribonuclease P protein component 4.